The chain runs to 289 residues: Protease HtpX (289 aa).

The next 2 membrane-spanning stretches (helical) occupy residues 5–25 and 33–53; these read IVLF…VMSL and MSGL…ISLL. His140 is a Zn(2+) binding site. Residue Glu141 is part of the active site. Residue His144 participates in Zn(2+) binding. 2 helical membrane passes run 155-175 and 193-213; these read LLQG…GGFI and GIVL…TMWF. Residue Glu218 coordinates Zn(2+).

Belongs to the peptidase M48B family. It depends on Zn(2+) as a cofactor.

Its subcellular location is the cell inner membrane. The protein is Protease HtpX of Xylella fastidiosa (strain M23).